Consider the following 588-residue polypeptide: 2-succinyl-5-enolpyruvyl-6-hydroxy-3-cyclohexene-1-carboxylate synthase (588 aa).

The disordered stretch occupies residues 1 to 22 (MTTTGSLPAQPSSTSPRTGNPS).

The protein belongs to the TPP enzyme family. MenD subfamily. Homodimer. The cofactor is Mg(2+). Mn(2+) serves as cofactor. It depends on thiamine diphosphate as a cofactor.

It carries out the reaction isochorismate + 2-oxoglutarate + H(+) = 5-enolpyruvoyl-6-hydroxy-2-succinyl-cyclohex-3-ene-1-carboxylate + CO2. Its pathway is quinol/quinone metabolism; 1,4-dihydroxy-2-naphthoate biosynthesis; 1,4-dihydroxy-2-naphthoate from chorismate: step 2/7. It participates in quinol/quinone metabolism; menaquinone biosynthesis. Functionally, catalyzes the thiamine diphosphate-dependent decarboxylation of 2-oxoglutarate and the subsequent addition of the resulting succinic semialdehyde-thiamine pyrophosphate anion to isochorismate to yield 2-succinyl-5-enolpyruvyl-6-hydroxy-3-cyclohexene-1-carboxylate (SEPHCHC). The sequence is that of 2-succinyl-5-enolpyruvyl-6-hydroxy-3-cyclohexene-1-carboxylate synthase from Clavibacter michiganensis subsp. michiganensis (strain NCPPB 382).